We begin with the raw amino-acid sequence, 694 residues long: MAREYKIEDYRNFGIMAHIDAGKTTMTERILFYTGKNHKIGETHDGASTMDWMEQEQERGITITSAATTTFWKGPDGRKRRFNIIDTPGHVDFTIEVERSLRVLDGAIALLDANAGVEPQTETVWRQAEKYRVPRMVFVNKMDKIGADFYRSVEMVGSRLGAKALVLQLPIGAENDFEGVVDLVYMRALRWDGSIGAPATVSEIPSDLKEKAEEYREKLIEMAVEVDEVATESYLEGVMPTDEQLVALIRKGTIEVQFHPVLCGTAFKNKGVQPLLDAVISYLPSPVDVPAISGIDVKTEDEVTRESSDDAPLSMLAFKIMNDPFVGSLTFCRIYSGKVQKGISLENTVKKKRERLGRMLQMHSNSREDIEEAFAGDIVALAGLKETTTGDTLCDPLRPVVLERMEFPEPVIEIAIEPKTKADQEKMGIALNRLAAEDPSFRVKSDEESGQTIIAGMGELHLDIIVDRMRREFKVEANIGQPQVAYRESITKAAEIDYTHKKQSGGAGQFARVKIIFEPHDGDDFIFESKIVGGAVPKEYIPGVQKGIESVMGSGPLAGFPMLGVKATLVDGGYHDVDSSVLAFEIAARAAFRDGAKKAGAQLLEPIMKVEVVTPEDYVGDVIGDLNSRRGQISGTEARSVSTVVNAMVPLANMFGYVNSLRSMSQGRAQYTMQFDHYEPVPSAVALEIQKKYA.

In terms of domain architecture, tr-type G spans 8-287 (EDYRNFGIMA…AVISYLPSPV (280 aa)). GTP is bound by residues 17 to 24 (AHIDAGKT), 86 to 90 (DTPGH), and 140 to 143 (NKMD).

Belongs to the TRAFAC class translation factor GTPase superfamily. Classic translation factor GTPase family. EF-G/EF-2 subfamily.

Its subcellular location is the cytoplasm. Its function is as follows. Catalyzes the GTP-dependent ribosomal translocation step during translation elongation. During this step, the ribosome changes from the pre-translocational (PRE) to the post-translocational (POST) state as the newly formed A-site-bound peptidyl-tRNA and P-site-bound deacylated tRNA move to the P and E sites, respectively. Catalyzes the coordinated movement of the two tRNA molecules, the mRNA and conformational changes in the ribosome. The polypeptide is Elongation factor G (Bartonella quintana (strain Toulouse) (Rochalimaea quintana)).